We begin with the raw amino-acid sequence, 304 residues long: 15-cis-phytoene synthase (304 aa).

It belongs to the phytoene/squalene synthase family. ATP serves as cofactor. Mn(2+) is required as a cofactor. The cofactor is Mg(2+).

It carries out the reaction 2 (2E,6E,10E)-geranylgeranyl diphosphate = 15-cis-phytoene + 2 diphosphate. Its pathway is carotenoid biosynthesis; astaxanthin biosynthesis. The protein operates within carotenoid biosynthesis; phytoene biosynthesis. In terms of biological role, involved in the biosynthesis of carotenoids for the production of astaxanthin. Catalyzes the condensation of two molecules of geranylgeranyl diphosphate (GGPP) to give prephytoene diphosphate (PPPP) and the subsequent rearrangement of the cyclopropylcarbinyl intermediate to yield 15-cis phytoene. The protein is 15-cis-phytoene synthase (crtB) of Paracoccus sp. (strain N81106 / MBIC 01143) (Agrobacterium aurantiacum).